Here is a 525-residue protein sequence, read N- to C-terminus: GMP synthase [glutamine-hydrolyzing] (525 aa).

A Glutamine amidotransferase type-1 domain is found at R9–L207. C86 serves as the catalytic Nucleophile. Active-site residues include H181 and E183. The region spanning W208–R400 is the GMPS ATP-PPase domain. S235–S241 contacts ATP.

Homodimer.

The enzyme catalyses XMP + L-glutamine + ATP + H2O = GMP + L-glutamate + AMP + diphosphate + 2 H(+). Its pathway is purine metabolism; GMP biosynthesis; GMP from XMP (L-Gln route): step 1/1. In terms of biological role, catalyzes the synthesis of GMP from XMP. This chain is GMP synthase [glutamine-hydrolyzing], found in Shigella boydii serotype 4 (strain Sb227).